A 467-amino-acid polypeptide reads, in one-letter code: UDP-glycosyltransferase 90A2 (467 aa).

UDP-alpha-D-glucose-binding positions include serine 289, 341 to 343, 358 to 366, and 380 to 383; these read VDQ, HCGWNSLTE, and AAEQ.

It belongs to the UDP-glycosyltransferase family.

The chain is UDP-glycosyltransferase 90A2 (UGT90A2) from Arabidopsis thaliana (Mouse-ear cress).